The sequence spans 521 residues: GMP synthase [glutamine-hydrolyzing] (521 aa).

The 193-residue stretch at 5–197 (KILILDFGSQ…VLDICGAQPG (193 aa)) folds into the Glutamine amidotransferase type-1 domain. Cys81 serves as the catalytic Nucleophile. Active-site residues include His171 and Glu173. The region spanning 198 to 390 (WTMPNYIEEA…LGLPREMVYR (193 aa)) is the GMPS ATP-PPase domain. 225 to 231 (SGGVDSS) provides a ligand contact to ATP.

As to quaternary structure, homodimer.

The catalysed reaction is XMP + L-glutamine + ATP + H2O = GMP + L-glutamate + AMP + diphosphate + 2 H(+). Its pathway is purine metabolism; GMP biosynthesis; GMP from XMP (L-Gln route): step 1/1. In terms of biological role, catalyzes the synthesis of GMP from XMP. This Neisseria gonorrhoeae (strain ATCC 700825 / FA 1090) protein is GMP synthase [glutamine-hydrolyzing].